A 72-amino-acid chain; its full sequence is Translation initiation factor IF-1 (72 aa).

The region spanning 1–72 (MSKEEAIEVE…TRGRITYRAK (72 aa)) is the S1-like domain.

The protein belongs to the IF-1 family. As to quaternary structure, component of the 30S ribosomal translation pre-initiation complex which assembles on the 30S ribosome in the order IF-2 and IF-3, IF-1 and N-formylmethionyl-tRNA(fMet); mRNA recruitment can occur at any time during PIC assembly.

Its subcellular location is the cytoplasm. Functionally, one of the essential components for the initiation of protein synthesis. Stabilizes the binding of IF-2 and IF-3 on the 30S subunit to which N-formylmethionyl-tRNA(fMet) subsequently binds. Helps modulate mRNA selection, yielding the 30S pre-initiation complex (PIC). Upon addition of the 50S ribosomal subunit IF-1, IF-2 and IF-3 are released leaving the mature 70S translation initiation complex. This chain is Translation initiation factor IF-1, found in Geotalea uraniireducens (strain Rf4) (Geobacter uraniireducens).